The sequence spans 445 residues: Argininosuccinate synthase (445 aa).

Residues 17-25 (AFSGGLDTS) and Ala-43 each bind ATP. Tyr-99 contributes to the L-citrulline binding site. Residues Gly-129 and Thr-131 each contribute to the ATP site. Thr-131, Asn-135, and Asp-136 together coordinate L-aspartate. Residue Asn-135 coordinates L-citrulline. An ATP-binding site is contributed by Asp-136. Residues Arg-139 and Ser-192 each contribute to the L-citrulline site. ATP is bound at residue Asp-194. Positions 201, 203, and 280 each coordinate L-citrulline.

Belongs to the argininosuccinate synthase family. Type 2 subfamily. As to quaternary structure, homotetramer.

Its subcellular location is the cytoplasm. It carries out the reaction L-citrulline + L-aspartate + ATP = 2-(N(omega)-L-arginino)succinate + AMP + diphosphate + H(+). It functions in the pathway amino-acid biosynthesis; L-arginine biosynthesis; L-arginine from L-ornithine and carbamoyl phosphate: step 2/3. In Herminiimonas arsenicoxydans, this protein is Argininosuccinate synthase.